Consider the following 222-residue polypeptide: Histone H1.5 (222 aa).

Over residues 1–16 the composition is skewed to low complexity; the sequence is MSETAPAETTAPAPVE. Residues 1-55 are disordered; the sequence is MSETAPAETTAPAPVEKSPAKKKTKKAGAAKRKATGPPVSELITKAVSASKERGG. An N-acetylserine modification is found at Ser2. Phosphoserine is present on Ser2. At Lys17 the chain carries N6-acetyllysine. Ser18 bears the Phosphoserine mark. A compositionally biased stretch (basic residues) spans 20-34; it reads AKKKTKKAGAAKRKA. An N6-methyllysine modification is found at Lys26. The residue at position 33 (Lys33) is an N6-(beta-hydroxybutyryl)lysine; alternate. Lys33 is modified (N6-succinyllysine; alternate). Thr35 is subject to Phosphothreonine. The H15 domain maps to 35–108; it reads TGPPVSELIT…GASGSFKLNK (74 aa). The residue at position 45 (Lys45) is an N6-acetyllysine. Lys51 carries the post-translational modification N6-(beta-hydroxybutyryl)lysine. Arg53 bears the Citrulline mark. Position 63 is an N6-(beta-hydroxybutyryl)lysine (Lys63). Lys74 bears the N6-acetyllysine mark. N6-(beta-hydroxybutyryl)lysine occurs at positions 84, 89, and 105. A disordered region spans residues 94–222; the sequence is QTKGTGASGS…KVKKAVSKKK (129 aa). The span at 118–129 shows a compositional bias: basic residues; that stretch reads KAKKTGAAKAKK. 2 positions are modified to phosphothreonine: Thr134 and Thr151. Over residues 136–157 the composition is skewed to basic residues; that stretch reads KKPKKTAGAKKTVKKTPKKAKK. The residue at position 164 (Lys164) is an N6-acetyllysine. Positions 165-183 are enriched in basic residues; that stretch reads KVTKSPKKAKAAAKPKKAT. Phosphoserine occurs at positions 169 and 185. Positions 190-222 are enriched in basic residues; it reads KAVKSKASKPKVTKPKAAKPKAAKVKKAVSKKK.

This sequence belongs to the histone H1/H5 family. As to quaternary structure, interacts with MSX1. Post-translationally, H1 histones are progressively phosphorylated during the cell cycle, becoming maximally phosphorylated during late G2 phase and M phase, and being dephosphorylated sharply thereafter. Citrullination at Arg-53 (H1R54ci) by PADI4 takes place within the DNA-binding site of H1 and results in its displacement from chromatin and global chromatin decondensation, thereby promoting pluripotency and stem cell maintenance.

It is found in the nucleus. The protein resides in the chromosome. Its function is as follows. Histone H1 protein binds to linker DNA between nucleosomes forming the macromolecular structure known as the chromatin fiber. Histones H1 are necessary for the condensation of nucleosome chains into higher-order structured fibers. Also acts as a regulator of individual gene transcription through chromatin remodeling, nucleosome spacing and DNA methylation. This Rattus norvegicus (Rat) protein is Histone H1.5 (H1-5).